Reading from the N-terminus, the 288-residue chain is NAD kinase (288 aa).

The Proton acceptor role is filled by Asp-70. Residues 70 to 71 (DG), 144 to 145 (ND), Arg-155, Lys-172, Asp-174, 185 to 190 (TGYSLS), and Gln-245 each bind NAD(+).

This sequence belongs to the NAD kinase family. A divalent metal cation serves as cofactor.

It localises to the cytoplasm. The catalysed reaction is NAD(+) + ATP = ADP + NADP(+) + H(+). Functionally, involved in the regulation of the intracellular balance of NAD and NADP, and is a key enzyme in the biosynthesis of NADP. Catalyzes specifically the phosphorylation on 2'-hydroxyl of the adenosine moiety of NAD to yield NADP. In Geobacter sp. (strain M21), this protein is NAD kinase.